We begin with the raw amino-acid sequence, 356 residues long: 3-isopropylmalate dehydrogenase (356 aa).

An NAD(+)-binding site is contributed by 73–86; that stretch reads GTQYDGLPREKRPE. Substrate is bound by residues Arg93, Arg103, Arg131, and Asp220. Positions 220, 244, and 248 each coordinate Mg(2+). 278–290 lines the NAD(+) pocket; sequence GSAPDIAGKGIAN.

This sequence belongs to the isocitrate and isopropylmalate dehydrogenases family. LeuB type 1 subfamily. Homodimer. Mg(2+) serves as cofactor. The cofactor is Mn(2+).

Its subcellular location is the cytoplasm. The catalysed reaction is (2R,3S)-3-isopropylmalate + NAD(+) = 4-methyl-2-oxopentanoate + CO2 + NADH. It participates in amino-acid biosynthesis; L-leucine biosynthesis; L-leucine from 3-methyl-2-oxobutanoate: step 3/4. Its function is as follows. Catalyzes the oxidation of 3-carboxy-2-hydroxy-4-methylpentanoate (3-isopropylmalate) to 3-carboxy-4-methyl-2-oxopentanoate. The product decarboxylates to 4-methyl-2 oxopentanoate. The protein is 3-isopropylmalate dehydrogenase of Nitrosomonas europaea (strain ATCC 19718 / CIP 103999 / KCTC 2705 / NBRC 14298).